The sequence spans 57 residues: Metallothionein-2 (57 aa).

A beta region spans residues 1–28 (PDPCCNDKCDCKEGECKTGCKCTSCRCP). A divalent metal cation contacts are provided by Cys4, Cys5, Cys9, Cys11, Cys16, Cys20, Cys22, Cys25, Cys27, Cys30, Cys33, Cys37, Cys39, Cys45, Cys49, Cys53, Cys55, and Cys56. An alpha region spans residues 29–57 (PCEQCSSGCKCANKEDCRKTCSKPCSCCP).

It belongs to the metallothionein superfamily. Type 3 family.

Its function is as follows. Metallothioneins have a high content of cysteine residues that bind various heavy metals. Class I MTS in marine crustacea are involved in the sequestration of elevated levels of heavy-metal ions. The protein is Metallothionein-2 of Scylla serrata (Mud crab).